The chain runs to 72 residues: Large ribosomal subunit protein bL31c (72 aa).

This sequence belongs to the bacterial ribosomal protein bL31 family. Type A subfamily. Part of the 50S ribosomal subunit.

The protein resides in the plastid. It is found in the chloroplast. Its function is as follows. Binds the 23S rRNA. The sequence is that of Large ribosomal subunit protein bL31c from Trieres chinensis (Marine centric diatom).